Reading from the N-terminus, the 316-residue chain is tRNA dimethylallyltransferase (316 aa).

13–20 contacts ATP; it reads GPTAVGKT. Substrate is bound at residue 15 to 20; it reads TAVGKT. Residues 38-41 form an interaction with substrate tRNA region; the sequence is DSIQ.

It belongs to the IPP transferase family. In terms of assembly, monomer. Requires Mg(2+) as cofactor.

The catalysed reaction is adenosine(37) in tRNA + dimethylallyl diphosphate = N(6)-dimethylallyladenosine(37) in tRNA + diphosphate. In terms of biological role, catalyzes the transfer of a dimethylallyl group onto the adenine at position 37 in tRNAs that read codons beginning with uridine, leading to the formation of N6-(dimethylallyl)adenosine (i(6)A). The chain is tRNA dimethylallyltransferase from Staphylococcus carnosus (strain TM300).